A 129-amino-acid chain; its full sequence is Fluoride-specific ion channel FluC 2 (129 aa).

4 helical membrane-spanning segments follow: residues 4 to 24 (LDVM…WWIG), 39 to 59 (TFLI…LFGV), 65 to 85 (YGTM…TTFS), and 100 to 120 (GGLA…AAWL). Na(+)-binding residues include Gly79 and Thr82.

This sequence belongs to the fluoride channel Fluc/FEX (TC 1.A.43) family.

The protein resides in the cell inner membrane. The enzyme catalyses fluoride(in) = fluoride(out). Its activity is regulated as follows. Na(+) is not transported, but it plays an essential structural role and its presence is essential for fluoride channel function. Functionally, fluoride-specific ion channel. Important for reducing fluoride concentration in the cell, thus reducing its toxicity. This chain is Fluoride-specific ion channel FluC 2, found in Brucella suis biovar 1 (strain 1330).